We begin with the raw amino-acid sequence, 175 residues long: Ribosome maturation factor RimM (175 aa).

The PRC barrel domain occupies 98–175 (EGEYYWHQLE…EMRVDWDADF (78 aa)).

The protein belongs to the RimM family. Binds ribosomal protein uS19.

It localises to the cytoplasm. Its function is as follows. An accessory protein needed during the final step in the assembly of 30S ribosomal subunit, possibly for assembly of the head region. Essential for efficient processing of 16S rRNA. May be needed both before and after RbfA during the maturation of 16S rRNA. It has affinity for free ribosomal 30S subunits but not for 70S ribosomes. The sequence is that of Ribosome maturation factor RimM from Pseudomonas aeruginosa (strain UCBPP-PA14).